A 474-amino-acid polypeptide reads, in one-letter code: ATP-dependent rRNA helicase RRP3 (474 aa).

Over residues 1–10 (MPSMKRRKLS) the composition is skewed to basic residues. Residues 1-43 (MPSMKRRKLSHTPPQGEAEDGFSDSETSQASLQETPGNDEKIE) form a disordered region. The span at 24–36 (DSETSQASLQETP) shows a compositional bias: polar residues. The short motif at 48-76 (KSFKDLGIIDSLCEACDSLGYKAPTQIQA) is the Q motif element. Residues 79 to 250 (IPLALQGRDL…RASLSNPLRV (172 aa)) form the Helicase ATP-binding domain. 92-99 (AETGSGKT) is an ATP binding site. A DEAD box motif is present at residues 198 to 201 (DEAD). The Helicase C-terminal domain maps to 278-422 (YLIYLLNEFP…EYKVEKEEVM (145 aa)). The tract at residues 442–474 (LHENRGKKGATLRNRRIGKGAKRSRDEMDREEG) is disordered. The span at 448 to 463 (KKGATLRNRRIGKGAK) shows a compositional bias: basic residues. A compositionally biased stretch (basic and acidic residues) spans 464-474 (RSRDEMDREEG).

It belongs to the DEAD box helicase family. DDX47/RRP3 subfamily. Interacts with the SSU processome.

Its subcellular location is the nucleus. The catalysed reaction is ATP + H2O = ADP + phosphate + H(+). Functionally, ATP-dependent rRNA helicase required for pre-ribosomal RNA processing. Involved in the maturation of the 35S-pre-rRNA and to its cleavage to mature 18S rRNA. In Coccidioides immitis (strain RS) (Valley fever fungus), this protein is ATP-dependent rRNA helicase RRP3.